Here is an 89-residue protein sequence, read N- to C-terminus: Envelope protein US9 (89 aa).

A compositionally biased stretch (basic and acidic residues) spans 1-10 (MTSRPADQDS). Residues 1–21 (MTSRPADQDSVRSSASVPLYP) form a disordered region. Residues 1–66 (MTSRPADQDS…RRRRTRCVGL (66 aa)) lie on the Intravirion side of the membrane. The Internalization motif signature appears at 20 to 23 (YPAA). Residues 29-38 (EAYYSESEDE) form an acidic region. 2 positions are modified to phosphoserine; by host CK2: Ser-33 and Ser-35. The chain crosses the membrane as a helical; Signal-anchor for type II membrane protein span at residues 67–87 (VIACLVVALLSGGFGALLVWL). Residues 88–89 (LR) are Virion surface-facing.

The protein belongs to the alphaherpesvirinae envelope protein US9 family. Post-translationally, phosphorylated on serines within the acidic cluster, possibly by host CK2. Phosphorylation determines whether endocytosed viral US9 traffics to the trans-Golgi network or recycles to the cell membrane.

It is found in the virion membrane. The protein localises to the host Golgi apparatus membrane. Its subcellular location is the host smooth endoplasmic reticulum membrane. The protein resides in the host cell membrane. Its function is as follows. Essential for the anterograde spread of the infection throughout the host nervous system. Together with the gE/gI heterodimer, US9 is involved in the sorting and transport of viral structural components toward axon tips. This is Envelope protein US9 from Homo sapiens (Human).